The following is a 227-amino-acid chain: Fibrillarin-like rRNA/tRNA 2'-O-methyltransferase (227 aa).

S-adenosyl-L-methionine-binding positions include 82–83, 100–101, 125–126, and 145–148; these read TT, EF, DA, and DVAQ.

The protein belongs to the methyltransferase superfamily. Fibrillarin family. As to quaternary structure, interacts with nop5. Component of box C/D small ribonucleoprotein (sRNP) particles that contain rpl7ae, FlpA and nop5, plus a guide RNA.

In terms of biological role, involved in pre-rRNA and tRNA processing. Utilizes the methyl donor S-adenosyl-L-methionine to catalyze the site-specific 2'-hydroxyl methylation of ribose moieties in rRNA and tRNA. Site specificity is provided by a guide RNA that base pairs with the substrate. Methylation occurs at a characteristic distance from the sequence involved in base pairing with the guide RNA. In Methanosarcina acetivorans (strain ATCC 35395 / DSM 2834 / JCM 12185 / C2A), this protein is Fibrillarin-like rRNA/tRNA 2'-O-methyltransferase.